Here is a 142-residue protein sequence, read N- to C-terminus: Hemoglobin subunit alpha (142 aa).

In terms of domain architecture, Globin spans 2-142 (VLSPADKSNV…VSTVLTSKYR (141 aa)). Ser4 bears the Phosphoserine mark. N6-succinyllysine is present on residues Lys8 and Lys12. Lys17 carries the post-translational modification N6-acetyllysine; alternate. Lys17 is subject to N6-succinyllysine; alternate. Tyr25 bears the Phosphotyrosine mark. A Phosphoserine modification is found at Ser36. Position 41 is an N6-succinyllysine (Lys41). Ser50 is modified (phosphoserine). His59 serves as a coordination point for O2. Position 88 (His88) interacts with heme b. Ser103 is subject to Phosphoserine. Thr109 carries the post-translational modification Phosphothreonine. Phosphoserine is present on residues Ser125 and Ser132. A phosphothreonine mark is found at Thr135 and Thr138. A Phosphoserine modification is found at Ser139.

The protein belongs to the globin family. In terms of assembly, heterotetramer of two alpha chains and two beta chains. In terms of tissue distribution, red blood cells.

Functionally, involved in oxygen transport from the lung to the various peripheral tissues. Its function is as follows. Hemopressin acts as an antagonist peptide of the cannabinoid receptor CNR1. Hemopressin-binding efficiently blocks cannabinoid receptor CNR1 and subsequent signaling. This chain is Hemoglobin subunit alpha (HBA), found in Macaca fuscata fuscata (Japanese macaque).